We begin with the raw amino-acid sequence, 302 residues long: Gap junction delta-2 protein (302 aa).

Over 1-19 the chain is Cytoplasmic; that stretch reads MGEWTILERLLEAAVQQHS. The chain crosses the membrane as a helical span at residues 20-42; sequence TMIGRILLTVVVIFRILVVAIVG. The Extracellular segment spans residues 43 to 75; the sequence is ETVYDDEQTMFVCNTLQPGCNQACYDKAFPISH. The chain crosses the membrane as a helical span at residues 76–98; the sequence is IRYWVFQIIMVCTPSLCFITYSV. Residues 99 to 177 lie on the Cytoplasmic side of the membrane; it reads HQSSKQRERQ…KIRRQEGISR (79 aa). A helical transmembrane segment spans residues 178–200; the sequence is FYIIQVVFRNALEIGFLMGQYFL. At 201-232 the chain is on the extracellular side; it reads YGFKVPSMYECNRYPCVKMVECYVSRPTEKTV. A helical transmembrane segment spans residues 233-255; that stretch reads FLVFMFAVSGLCVILNLAELNHL. The Cytoplasmic segment spans residues 256–302; it reads GWRKIKTAVRGAQERRKSIYEIRNKDSPHRIGVPNFGRTQSSDSAYV.

Belongs to the connexin family. Delta-type subfamily. As to quaternary structure, a connexon is composed of a hexamer of connexins. In terms of tissue distribution, retinal specific.

The protein resides in the cell membrane. It is found in the cell junction. Its subcellular location is the gap junction. In terms of biological role, one gap junction consists of a cluster of closely packed pairs of transmembrane channels, the connexons, through which materials of low MW diffuse from one cell to a neighboring cell. This chain is Gap junction delta-2 protein, found in Leucoraja erinaceus (Little skate).